Reading from the N-terminus, the 78-residue chain is Large ribosomal subunit protein bL28 (78 aa).

It belongs to the bacterial ribosomal protein bL28 family.

In Prochlorococcus marinus (strain MIT 9301), this protein is Large ribosomal subunit protein bL28.